A 381-amino-acid chain; its full sequence is 1-deoxy-D-xylulose 5-phosphate reductoisomerase (381 aa).

NADPH contacts are provided by Thr10, Gly11, Ser12, Ile13, Gly36, Lys37, Asn38, and Asn120. Lys121 lines the 1-deoxy-D-xylulose 5-phosphate pocket. Glu122 is a binding site for NADPH. Asp146 serves as a coordination point for Mn(2+). Residues Ser147, Glu148, Ser172, and His195 each coordinate 1-deoxy-D-xylulose 5-phosphate. Mn(2+) is bound at residue Glu148. NADPH is bound at residue Gly201. Residues Ser208, Asn213, Lys214, and Glu217 each coordinate 1-deoxy-D-xylulose 5-phosphate. Mn(2+) is bound at residue Glu217.

This sequence belongs to the DXR family. Mg(2+) is required as a cofactor. It depends on Mn(2+) as a cofactor.

It carries out the reaction 2-C-methyl-D-erythritol 4-phosphate + NADP(+) = 1-deoxy-D-xylulose 5-phosphate + NADPH + H(+). It participates in isoprenoid biosynthesis; isopentenyl diphosphate biosynthesis via DXP pathway; isopentenyl diphosphate from 1-deoxy-D-xylulose 5-phosphate: step 1/6. Catalyzes the NADPH-dependent rearrangement and reduction of 1-deoxy-D-xylulose-5-phosphate (DXP) to 2-C-methyl-D-erythritol 4-phosphate (MEP). The chain is 1-deoxy-D-xylulose 5-phosphate reductoisomerase from Lysinibacillus sphaericus (strain C3-41).